The primary structure comprises 388 residues: P2X purinoceptor 4 (388 aa).

The Cytoplasmic segment spans residues 1–33 (MAGCCSVLGSFLFEYDTPRIVLIRSRKVGLMNR). Residues 34–54 (VVQLLILAYVIGWVFVWEKGY) form a helical membrane-spanning segment. The Extracellular segment spans residues 55 to 338 (QETDSVVSSV…KFDIIPTMIN (284 aa)). ATP-binding residues include Lys-67 and Lys-69. CTP contacts are provided by Lys-67 and Lys-69. 5 N-linked (GlcNAc...) asparagine glycosylation sites follow: Asn-75, Asn-110, Asn-131, Asn-153, and Asn-184. 3 disulfides stabilise this stretch: Cys-116–Cys-165, Cys-126–Cys-149, and Cys-132–Cys-159. ATP-binding residues include Thr-186 and Leu-188. Residue Thr-186 participates in CTP binding. Asn-199 and Asn-208 each carry an N-linked (GlcNAc...) asparagine glycan. Intrachain disulfides connect Cys-217–Cys-227 and Cys-261–Cys-270. Residues Asn-293, Arg-295, and Lys-313 each contribute to the ATP site. Positions 293, 295, and 313 each coordinate CTP. The helical transmembrane segment at 339 to 359 (VGSGLALLGVATVLCDVIVLY) threads the bilayer. Residues 360-388 (CMKKRYYYRDKKYKYVEDYEQGLSGEMNQ) lie on the Cytoplasmic side of the membrane.

The protein belongs to the P2X receptor family. Functional P2RXs are organized as homomeric and heteromeric trimers. Functional P2XRs are organized as homomeric and heteromeric trimers. Forms heterotrimer with P2RX1. Interacts with P2RX7 (via C-terminus); this interaction is functional only in the presence of ATP. Forms heterotrimer with P2RX4; functional differences between homomeric P2RX4 and P2RX4/6 heterotrimer are minor. Interacts with AP1M2.

It localises to the cell membrane. Its subcellular location is the lysosome membrane. It catalyses the reaction K(+)(in) = K(+)(out). The enzyme catalyses Na(+)(in) = Na(+)(out). It carries out the reaction Ca(2+)(in) = Ca(2+)(out). Activated by ATP. pH-dependent and inhibited by acidic pH. In terms of biological role, ATP-gated nonselective transmembrane cation channel permeable to potassium, sodium and calcium. CTP, but not GTP or UTP, functions as a weak affinity agonist for P2RX4. Activated by extracellularly released ATP, it plays multiple role in immunity and central nervous system physiology. Plays a key role in initial steps of T-cell activation and Ca(2+) microdomain formation. Also participates in basal T-cell activity without TCR/CD3 stimulation. Promotes the differentiation and activation of Th17 cells via expression of retinoic acid-related orphan receptor C/RORC. Upon activation, drives microglia motility via the PI3K/Akt pathway. Could also function as an ATP-gated cation channel of lysosomal membranes. The chain is P2X purinoceptor 4 (P2rx4) from Mus musculus (Mouse).